The sequence spans 334 residues: Ribosomal RNA small subunit methyltransferase H (334 aa).

The interval 1 to 21 (MNALPIRTAAPSGHSGGHSST) is disordered. S-adenosyl-L-methionine-binding positions include 52–54 (GGY), aspartate 71, phenylalanine 98, aspartate 119, and glutamine 126.

The protein belongs to the methyltransferase superfamily. RsmH family.

It is found in the cytoplasm. The enzyme catalyses cytidine(1402) in 16S rRNA + S-adenosyl-L-methionine = N(4)-methylcytidine(1402) in 16S rRNA + S-adenosyl-L-homocysteine + H(+). Specifically methylates the N4 position of cytidine in position 1402 (C1402) of 16S rRNA. This Granulibacter bethesdensis (strain ATCC BAA-1260 / CGDNIH1) protein is Ribosomal RNA small subunit methyltransferase H.